Consider the following 192-residue polypeptide: GTP cyclohydrolase 1 (192 aa).

Residues Cys-81, His-84, and Cys-153 each coordinate Zn(2+).

Belongs to the GTP cyclohydrolase I family. Toroid-shaped homodecamer, composed of two pentamers of five dimers.

It carries out the reaction GTP + H2O = 7,8-dihydroneopterin 3'-triphosphate + formate + H(+). The protein operates within cofactor biosynthesis; 7,8-dihydroneopterin triphosphate biosynthesis; 7,8-dihydroneopterin triphosphate from GTP: step 1/1. The polypeptide is GTP cyclohydrolase 1 (Streptococcus mutans serotype c (strain ATCC 700610 / UA159)).